Here is a 206-residue protein sequence, read N- to C-terminus: Synaptosomal-associated protein 25 (206 aa).

Positions 1–20 are enriched in basic and acidic residues; that stretch reads MAEDADMRNELEEMQRRADQ. Residues 1 to 23 form a disordered region; it reads MAEDADMRNELEEMQRRADQLAD. Residues 19 to 81 form the t-SNARE coiled-coil homology 1 domain; sequence DQLADESLES…KEAEKNLTDL (63 aa). 4 S-palmitoyl cysteine lipidation sites follow: C85, C88, C90, and C92. Phosphothreonine is present on T138. A t-SNARE coiled-coil homology 2 domain is found at 140–202; that stretch reads DARENEMDEN…DEANQRATKM (63 aa). S187 carries the post-translational modification Phosphoserine.

This sequence belongs to the SNAP-25 family. As to quaternary structure, part of the SNARE core complex containing SNAP25, VAMP2 and STX1A. This complex binds CPLX1. Interacts with TRIM9, RIMS1 and SNAPIN. Binds STXBP6. Found in a ternary complex with STX1A and VAMP8. Associates with the BLOC-1 complex. Isoform 1 and isoform 2 interact with BLOC1S6. Interacts with alpha-synuclein/SNCA. In terms of processing, palmitoylated. Cys-85 appears to be the main site, and palmitoylation is required for membrane association.

The protein localises to the membrane. It localises to the synapse. The protein resides in the synaptosome. Its subcellular location is the cell membrane. T-SNARE involved in the molecular regulation of neurotransmitter release. May play an important role in the synaptic function of specific neuronal systems. Associates with proteins involved in vesicle docking and membrane fusion. The sequence is that of Synaptosomal-associated protein 25 (SNAP25) from Gallus gallus (Chicken).